A 470-amino-acid chain; its full sequence is ATP synthase subunit beta (470 aa).

ATP is bound at residue 148–155; the sequence is GGAGVGKT.

The protein belongs to the ATPase alpha/beta chains family. F-type ATPases have 2 components, CF(1) - the catalytic core - and CF(0) - the membrane proton channel. CF(1) has five subunits: alpha(3), beta(3), gamma(1), delta(1), epsilon(1). CF(0) has three main subunits: a(1), b(2) and c(9-12). The alpha and beta chains form an alternating ring which encloses part of the gamma chain. CF(1) is attached to CF(0) by a central stalk formed by the gamma and epsilon chains, while a peripheral stalk is formed by the delta and b chains.

It is found in the cell inner membrane. It carries out the reaction ATP + H2O + 4 H(+)(in) = ADP + phosphate + 5 H(+)(out). Produces ATP from ADP in the presence of a proton gradient across the membrane. The catalytic sites are hosted primarily by the beta subunits. The sequence is that of ATP synthase subunit beta from Teredinibacter turnerae (strain ATCC 39867 / T7901).